Consider the following 367-residue polypeptide: Otolith matrix protein 1 (367 aa).

An N-terminal signal peptide occupies residues 1 to 23 (MDRLDRRLAATLLLFSFISFSTQ). A Transferrin-like domain is found at 27–363 (ISWCVVSEAE…YTTVLQAFEC (337 aa)).

Belongs to the transferrin family. As to quaternary structure, interacts with OTOL1. In terms of tissue distribution, expressed in the sacculus during the day.

It is found in the secreted. Its function is as follows. Required for normal otolith growth and deposition of otolin-1 in the otolith. This is Otolith matrix protein 1 (otomp) from Oncorhynchus mykiss (Rainbow trout).